The sequence spans 239 residues: Phosphoribosylaminoimidazole-succinocarboxamide synthase (239 aa).

This sequence belongs to the SAICAR synthetase family.

The enzyme catalyses 5-amino-1-(5-phospho-D-ribosyl)imidazole-4-carboxylate + L-aspartate + ATP = (2S)-2-[5-amino-1-(5-phospho-beta-D-ribosyl)imidazole-4-carboxamido]succinate + ADP + phosphate + 2 H(+). Its pathway is purine metabolism; IMP biosynthesis via de novo pathway; 5-amino-1-(5-phospho-D-ribosyl)imidazole-4-carboxamide from 5-amino-1-(5-phospho-D-ribosyl)imidazole-4-carboxylate: step 1/2. This is Phosphoribosylaminoimidazole-succinocarboxamide synthase from Bacillus thuringiensis subsp. konkukian (strain 97-27).